A 203-amino-acid chain; its full sequence is CASP-like protein 4B2 (203 aa).

Residues 1 to 57 (MAMVTADASAAADAATKQPDVEKDYSSYNGASTAGAGGGGVVESVVARWRREDMLDK) lie on the Cytoplasmic side of the membrane. A helical transmembrane segment spans residues 58–78 (CPLALHAAAAAFAFVALVLVA). Residues 79 to 92 (SNQHGDWMQFDRYQ) are Extracellular-facing. The helical transmembrane segment at 93 to 113 (EYMYLLAIAALAFAYSLAQAL) threads the bilayer. Residues 114–135 (RHAHRMRGGADPIPAPSARLFD) lie on the Cytoplasmic side of the membrane. A helical transmembrane segment spans residues 136-156 (FIADQVVAYLLMSALSAAIPI). Residues 157-171 (TNRMRTAVINNFTDA) lie on the Extracellular side of the membrane. Asn-167 carries N-linked (GlcNAc...) asparagine glycosylation. The chain crosses the membrane as a helical span at residues 172 to 192 (TAAAISMAFLAFVALALSATV). Residues 193–203 (SGYKLSRQMYM) are Cytoplasmic-facing.

Belongs to the Casparian strip membrane proteins (CASP) family. In terms of assembly, homodimer and heterodimers.

It is found in the cell membrane. The protein is CASP-like protein 4B2 of Hordeum vulgare subsp. vulgare (Domesticated barley).